Reading from the N-terminus, the 470-residue chain is Uronate isomerase (470 aa).

The protein belongs to the metallo-dependent hydrolases superfamily. Uronate isomerase family.

The enzyme catalyses D-glucuronate = D-fructuronate. It carries out the reaction aldehydo-D-galacturonate = keto-D-tagaturonate. The protein operates within carbohydrate metabolism; pentose and glucuronate interconversion. The protein is Uronate isomerase of Shigella boydii serotype 4 (strain Sb227).